Consider the following 145-residue polypeptide: [Ribosomal protein bS18]-alanine N-acetyltransferase (145 aa).

In terms of domain architecture, N-acetyltransferase spans M1 to L145. L67 to V69 is a binding site for acetyl-CoA. The active-site Proton acceptor is E101. Residue N106 participates in acetyl-CoA binding. Residue Y113 is the Proton donor of the active site.

It belongs to the acetyltransferase family. RimI subfamily.

It is found in the cytoplasm. The enzyme catalyses N-terminal L-alanyl-[ribosomal protein bS18] + acetyl-CoA = N-terminal N(alpha)-acetyl-L-alanyl-[ribosomal protein bS18] + CoA + H(+). Its function is as follows. Acetylates the N-terminal alanine of ribosomal protein bS18. The chain is [Ribosomal protein bS18]-alanine N-acetyltransferase from Haemophilus ducreyi (strain 35000HP / ATCC 700724).